The primary structure comprises 485 residues: Adenosylhomocysteinase (485 aa).

3 residues coordinate substrate: threonine 64, aspartate 139, and glutamate 205. 206–208 provides a ligand contact to NAD(+); sequence TTT. Positions 235 and 239 each coordinate substrate. Residues asparagine 240, 269-274, glutamate 292, asparagine 327, 348-350, and asparagine 397 contribute to the NAD(+) site; these read GYGDVG and IGH.

The protein belongs to the adenosylhomocysteinase family. Homotetramer. The cofactor is NAD(+).

The catalysed reaction is S-adenosyl-L-homocysteine + H2O = L-homocysteine + adenosine. Its pathway is amino-acid biosynthesis; L-homocysteine biosynthesis; L-homocysteine from S-adenosyl-L-homocysteine: step 1/1. In terms of biological role, adenosylhomocysteine is a competitive inhibitor of S-adenosyl-L-methionine-dependent methyl transferase reactions; therefore adenosylhomocysteinase may play a key role in the control of methylations via regulation of the intracellular concentration of adenosylhomocysteine. The polypeptide is Adenosylhomocysteinase (SAHH) (Triticum aestivum (Wheat)).